The chain runs to 557 residues: Dihydroxy-acid dehydratase (557 aa).

Aspartate 78 lines the Mg(2+) pocket. Cysteine 119 provides a ligand contact to [2Fe-2S] cluster. Positions 120 and 121 each coordinate Mg(2+). Lysine 121 is subject to N6-carboxylysine. [2Fe-2S] cluster is bound at residue cysteine 191. Glutamate 442 serves as a coordination point for Mg(2+). The active-site Proton acceptor is the serine 468.

The protein belongs to the IlvD/Edd family. As to quaternary structure, homodimer. The cofactor is [2Fe-2S] cluster. Requires Mg(2+) as cofactor.

It carries out the reaction (2R)-2,3-dihydroxy-3-methylbutanoate = 3-methyl-2-oxobutanoate + H2O. It catalyses the reaction (2R,3R)-2,3-dihydroxy-3-methylpentanoate = (S)-3-methyl-2-oxopentanoate + H2O. It participates in amino-acid biosynthesis; L-isoleucine biosynthesis; L-isoleucine from 2-oxobutanoate: step 3/4. Its pathway is amino-acid biosynthesis; L-valine biosynthesis; L-valine from pyruvate: step 3/4. Functionally, functions in the biosynthesis of branched-chain amino acids. Catalyzes the dehydration of (2R,3R)-2,3-dihydroxy-3-methylpentanoate (2,3-dihydroxy-3-methylvalerate) into 2-oxo-3-methylpentanoate (2-oxo-3-methylvalerate) and of (2R)-2,3-dihydroxy-3-methylbutanoate (2,3-dihydroxyisovalerate) into 2-oxo-3-methylbutanoate (2-oxoisovalerate), the penultimate precursor to L-isoleucine and L-valine, respectively. The protein is Dihydroxy-acid dehydratase of Lachnospira eligens (strain ATCC 27750 / DSM 3376 / VPI C15-48 / C15-B4) (Eubacterium eligens).